Reading from the N-terminus, the 102-residue chain is Cytochrome b (102 aa).

The next 3 membrane-spanning stretches (helical) occupy residues 1–21, 45–66, and 81–101; these read FGSL…FLAM, WLMR…FLHI, and WNIG…GYVL. 2 residues coordinate heme b: H51 and H65.

This sequence belongs to the cytochrome b family. As to quaternary structure, the cytochrome bc1 complex contains 3 respiratory subunits (MT-CYB, CYC1 and UQCRFS1), 2 core proteins (UQCRC1 and UQCRC2) and probably 6 low-molecular weight proteins. Requires heme b as cofactor.

The protein resides in the mitochondrion inner membrane. Its function is as follows. Component of the ubiquinol-cytochrome c reductase complex (complex III or cytochrome b-c1 complex) that is part of the mitochondrial respiratory chain. The b-c1 complex mediates electron transfer from ubiquinol to cytochrome c. Contributes to the generation of a proton gradient across the mitochondrial membrane that is then used for ATP synthesis. In Ambystoma tigrinum (Eastern tiger salamander), this protein is Cytochrome b (mt-cyb).